The chain runs to 224 residues: Dehydration-responsive element-binding protein 1G (224 aa).

Over residues 1 to 16 the composition is skewed to polar residues; the sequence is MDVSAALSSDYSSGTP. A disordered region spans residues 1 to 46; that stretch reads MDVSAALSSDYSSGTPSPVAADADDGSSAYMTVSSAPPKRRAGRTK. The segment at residues 54–111 is a DNA-binding region (AP2/ERF); sequence VFKGVRRRNPGRWVCEVREPHGKQRIWLGTFETAEMAARAHDVAALALRGRAACLNFA. 2 disordered regions span residues 139-161 and 200-224; these read AFRP…SGAT and PPMA…LWSY.

The protein belongs to the AP2/ERF transcription factor family. ERF subfamily.

It localises to the nucleus. Its function is as follows. Transcriptional activator that binds specifically to the DNA sequence 5'-[AG]CCGAC-3'. Binding to the C-repeat/DRE element mediates high salinity- and dehydration-inducible transcription. In Oryza sativa subsp. japonica (Rice), this protein is Dehydration-responsive element-binding protein 1G (DREB1G).